We begin with the raw amino-acid sequence, 377 residues long: Malate dehydrogenase, cytoplasmic (377 aa).

The Pro/N-degron signature appears at 2–5; it reads PHSV. Phosphothreonine is present on Thr-6. NAD(+) contacts are provided by residues 20–26 and Asp-57; that span reads GAAGGIG. The substrate site is built by Arg-106 and Arg-112. NAD(+) contacts are provided by residues Asn-119 and 144-146; that span reads ISN. Positions 146 and 185 each coordinate substrate. Residue His-215 is the Proton acceptor of the active site. Met-266 serves as a coordination point for NAD(+).

Belongs to the LDH/MDH superfamily. MDH type 1 family. As to quaternary structure, homodimer. Targeted for proteasomal degradation when cells are shifted to glucose-containing growth medium.

The protein resides in the cytoplasm. The catalysed reaction is (S)-malate + NAD(+) = oxaloacetate + NADH + H(+). Functionally, the isoenzyme MDH2 may function primarily in the glyoxylate cycle. The sequence is that of Malate dehydrogenase, cytoplasmic (MDH2) from Saccharomyces cerevisiae (strain ATCC 204508 / S288c) (Baker's yeast).